The sequence spans 275 residues: Anamorsin homolog (275 aa).

An N-terminal SAM-like domain region spans residues 1 to 147 (MTSASIHIGS…QSASSAAATG (147 aa)). Residues 148–183 (RINLGGAKTKVKLSLDDDDDDQLIDEDDLLNGGGGM) form a linker region. 4 residues coordinate [2Fe-2S] cluster: Cys-203, Cys-209, Cys-212, and Cys-214. Residues 203 to 214 (CGGRKACDNCTC) are fe-S binding site A. [4Fe-4S] cluster contacts are provided by Cys-238, Cys-241, Cys-249, and Cys-252. 2 consecutive short sequence motifs (cx2C motif) follow at residues 238-241 (CGNC) and 249-252 (CAGC). The tract at residues 238–252 (CGNCAKGDAFRCAGC) is fe-S binding site B.

It belongs to the anamorsin family. As to quaternary structure, monomer. [2Fe-2S] cluster is required as a cofactor. Requires [4Fe-4S] cluster as cofactor.

The protein resides in the cytoplasm. Its subcellular location is the mitochondrion intermembrane space. In terms of biological role, component of the cytosolic iron-sulfur (Fe-S) protein assembly (CIA) machinery. Required for the maturation of extramitochondrial Fe-S proteins. Part of an electron transfer chain functioning in an early step of cytosolic Fe-S biogenesis, facilitating the de novo assembly of a [4Fe-4S] cluster on the cytosolic Fe-S scaffold complex. Electrons are transferred from NADPH via a FAD- and FMN-containing diflavin oxidoreductase. Together with the diflavin oxidoreductase, also required for the assembly of the diferric tyrosyl radical cofactor of ribonucleotide reductase (RNR), probably by providing electrons for reduction during radical cofactor maturation in the catalytic small subunit. This chain is Anamorsin homolog, found in Thalassiosira pseudonana (Marine diatom).